The primary structure comprises 94 residues: Co-chaperonin GroES (94 aa).

Belongs to the GroES chaperonin family. In terms of assembly, heptamer of 7 subunits arranged in a ring. Interacts with the chaperonin GroEL.

The protein resides in the cytoplasm. Together with the chaperonin GroEL, plays an essential role in assisting protein folding. The GroEL-GroES system forms a nano-cage that allows encapsulation of the non-native substrate proteins and provides a physical environment optimized to promote and accelerate protein folding. GroES binds to the apical surface of the GroEL ring, thereby capping the opening of the GroEL channel. This is Co-chaperonin GroES from Alkaliphilus oremlandii (strain OhILAs) (Clostridium oremlandii (strain OhILAs)).